The following is a 443-amino-acid chain: Glutamyl-tRNA reductase (443 aa).

Substrate is bound by residues 49–52 (TCNR), Ser-109, 114–116 (ETQ), and Gln-120. Catalysis depends on Cys-50, which acts as the Nucleophile. An NADP(+)-binding site is contributed by 189 to 194 (GAGKMG).

This sequence belongs to the glutamyl-tRNA reductase family. Homodimer.

It catalyses the reaction (S)-4-amino-5-oxopentanoate + tRNA(Glu) + NADP(+) = L-glutamyl-tRNA(Glu) + NADPH + H(+). It participates in porphyrin-containing compound metabolism; protoporphyrin-IX biosynthesis; 5-aminolevulinate from L-glutamyl-tRNA(Glu): step 1/2. Its function is as follows. Catalyzes the NADPH-dependent reduction of glutamyl-tRNA(Glu) to glutamate 1-semialdehyde (GSA). The chain is Glutamyl-tRNA reductase from Bacillus mycoides (strain KBAB4) (Bacillus weihenstephanensis).